The primary structure comprises 378 residues: tRNA-specific 2-thiouridylase MnmA (378 aa).

ATP contacts are provided by residues 6–13 and Leu32; that span reads AMSGGVDS. The Nucleophile role is filled by Cys101. Cys101 and Cys199 are oxidised to a cystine. ATP is bound at residue Gly125. Positions 148–150 are interaction with tRNA; sequence KDQ. The active-site Cysteine persulfide intermediate is Cys199.

Belongs to the MnmA/TRMU family.

The protein resides in the cytoplasm. It carries out the reaction S-sulfanyl-L-cysteinyl-[protein] + uridine(34) in tRNA + AH2 + ATP = 2-thiouridine(34) in tRNA + L-cysteinyl-[protein] + A + AMP + diphosphate + H(+). In terms of biological role, catalyzes the 2-thiolation of uridine at the wobble position (U34) of tRNA, leading to the formation of s(2)U34. The chain is tRNA-specific 2-thiouridylase MnmA from Micrococcus luteus (strain ATCC 4698 / DSM 20030 / JCM 1464 / CCM 169 / CCUG 5858 / IAM 1056 / NBRC 3333 / NCIMB 9278 / NCTC 2665 / VKM Ac-2230) (Micrococcus lysodeikticus).